Here is a 234-residue protein sequence, read N- to C-terminus: Sugar fermentation stimulation protein homolog (234 aa).

Belongs to the SfsA family.

The polypeptide is Sugar fermentation stimulation protein homolog (Shewanella loihica (strain ATCC BAA-1088 / PV-4)).